The following is a 369-amino-acid chain: Histidine decarboxylase (369 aa).

Residue His-119 coordinates substrate. Position 230 is an N6-(pyridoxal phosphate)lysine (Lys-230).

It belongs to the group II decarboxylase family. In terms of assembly, homotetramer. Requires pyridoxal 5'-phosphate as cofactor.

It carries out the reaction L-histidine + H(+) = histamine + CO2. The chain is Histidine decarboxylase from Mesorhizobium japonicum (strain LMG 29417 / CECT 9101 / MAFF 303099) (Mesorhizobium loti (strain MAFF 303099)).